The sequence spans 470 residues: Negative regulator of sexual conjugation and meiosis (470 aa).

The Protein kinase domain occupies 18-295 (LRFVSIIGAG…ITLPELSTLV (278 aa)). Residues 24-32 (IGAGAYGVV) and Lys47 contribute to the ATP site. Catalysis depends on Asp143, which acts as the Proton acceptor. Position 469 is a phosphoserine (Ser469).

The protein belongs to the protein kinase superfamily. Ser/Thr protein kinase family.

The enzyme catalyses L-seryl-[protein] + ATP = O-phospho-L-seryl-[protein] + ADP + H(+). The catalysed reaction is L-threonyl-[protein] + ATP = O-phospho-L-threonyl-[protein] + ADP + H(+). This protein is a negative regulator of both sexual conjugation and meiosis. It phosphorylates mei2. It blocks the onset of meiosis until conjugation takes place. The sequence is that of Negative regulator of sexual conjugation and meiosis (ran1) from Schizosaccharomyces pombe (strain 972 / ATCC 24843) (Fission yeast).